Reading from the N-terminus, the 216-residue chain is Probable transaldolase (216 aa).

Catalysis depends on Lys-83, which acts as the Schiff-base intermediate with substrate.

This sequence belongs to the transaldolase family. Type 3B subfamily.

The protein resides in the cytoplasm. The enzyme catalyses D-sedoheptulose 7-phosphate + D-glyceraldehyde 3-phosphate = D-erythrose 4-phosphate + beta-D-fructose 6-phosphate. Its pathway is carbohydrate degradation; pentose phosphate pathway; D-glyceraldehyde 3-phosphate and beta-D-fructose 6-phosphate from D-ribose 5-phosphate and D-xylulose 5-phosphate (non-oxidative stage): step 2/3. Functionally, transaldolase is important for the balance of metabolites in the pentose-phosphate pathway. The polypeptide is Probable transaldolase (Thermoanaerobacter sp. (strain X514)).